Reading from the N-terminus, the 89-residue chain is uncharacterized protein (89 aa).

Helical transmembrane passes span 1-21 (MFLA…ISLI) and 28-48 (GISL…TIAA).

Its subcellular location is the cell membrane. This is an uncharacterized protein from Methanocaldococcus jannaschii (strain ATCC 43067 / DSM 2661 / JAL-1 / JCM 10045 / NBRC 100440) (Methanococcus jannaschii).